The following is a 100-amino-acid chain: Large ribosomal subunit protein uL23 (100 aa).

It belongs to the universal ribosomal protein uL23 family. As to quaternary structure, part of the 50S ribosomal subunit. Contacts protein L29, and trigger factor when it is bound to the ribosome.

Functionally, one of the early assembly proteins it binds 23S rRNA. One of the proteins that surrounds the polypeptide exit tunnel on the outside of the ribosome. Forms the main docking site for trigger factor binding to the ribosome. The protein is Large ribosomal subunit protein uL23 of Thermosynechococcus vestitus (strain NIES-2133 / IAM M-273 / BP-1).